The primary structure comprises 423 residues: Major royal jelly protein 9 (423 aa).

The signal sequence occupies residues 1–20 (MSFNIWWLILYFSIVCQAKA). N-linked (GlcNAc...) asparagine glycosylation is found at Asn-110, Asn-118, Asn-177, Asn-196, and Asn-345.

Belongs to the major royal jelly protein family. In terms of tissue distribution, expressed at very low levels in the hypopharyngeal glands of adult worker bees (at protein level); expression peaks at 12 days post eclosion. Secreted into bee venom in the sting apparatus (at protein level). Expressed in the brains of adult worker bees peaking at 12 days post eclosion (at protein level). Expressed in the spermatheca of adult queen bees (at protein level); expression levels are higher in mated queens than in virgin queens. Along with Mrjp8 expressed at very low levels in the head of worker bees compared to other major royal jelly proteins.

The protein resides in the secreted. Functionally, component of bee sting venom. Component of royal jelly, a substance produced in the hypopharyngeal gland containing proteins, free amino acids, fatty acids, sugars and other nutrients, which is fed to developing larvae by worker nurse bees; may be present only at trace levels. All larvae are fed some royal jelly (also known as worker jelly) early in their development but it forms the principal source of nutrition for larvae destined to become queen bees. Produced in the spermatheca of adult queen bees, along with other major royal jelly proteins, where it may act as a nutrient supply for sperm stored by mated queens, or be involved in energy metabolism. The polypeptide is Major royal jelly protein 9 (Apis mellifera (Honeybee)).